Consider the following 167-residue polypeptide: UPF0225 protein VV1_2912 (167 aa).

This sequence belongs to the UPF0225 family.

The chain is UPF0225 protein VV1_2912 from Vibrio vulnificus (strain CMCP6).